Consider the following 386-residue polypeptide: MKNGAVIIPAAGSGTRMKLDYPKQYHAVAGTPIIVHTIRAFNKHPCIAKIILVVPQDHLEESKALLQKYQLENISIVTGGARRQDSVLRGLQEVPESIDIVLVHDGARPMVSAELISRCYKGAQQYGAVIAAVPVKDTLKRGAGRIVTGTVDREGLWQAQTPQAARKALLVKAFKENGMRNVTDESTLLEGVGIPVTLIEGSETNIKITRPEDLILAENFLREKKEPMQKIRIGHGFDAHQLVEKRRLILGGVEIPYHLGLAGHSDADVLVHALCDALLGAIGAGDIGRHFPDSSDAFKDIYSIRLLESVMQKVGELNYKIGNADISVICQAPKLAPYLKQMQEIIATSCACQISDINIKATTTEKMGYTGRGEGISCHAVVLLQQ.

The 2-C-methyl-D-erythritol 4-phosphate cytidylyltransferase stretch occupies residues 1-231; that stretch reads MKNGAVIIPA…REKKEPMQKI (231 aa). The 2-C-methyl-D-erythritol 2,4-cyclodiphosphate synthase stretch occupies residues 232 to 386; it reads RIGHGFDAHQ…SCHAVVLLQQ (155 aa). Residues aspartate 238 and histidine 240 each contribute to the a divalent metal cation site. 4-CDP-2-C-methyl-D-erythritol 2-phosphate-binding positions include 238–240 and 264–265; these read DAH and HS. An a divalent metal cation-binding site is contributed by histidine 272. Residues 286–288, 362–365, tyrosine 369, and arginine 372 each bind 4-CDP-2-C-methyl-D-erythritol 2-phosphate; these read DIG and TTTE.

In the N-terminal section; belongs to the IspD/TarI cytidylyltransferase family. IspD subfamily. The protein in the C-terminal section; belongs to the IspF family. It depends on a divalent metal cation as a cofactor.

The enzyme catalyses 2-C-methyl-D-erythritol 4-phosphate + CTP + H(+) = 4-CDP-2-C-methyl-D-erythritol + diphosphate. The catalysed reaction is 4-CDP-2-C-methyl-D-erythritol 2-phosphate = 2-C-methyl-D-erythritol 2,4-cyclic diphosphate + CMP. It functions in the pathway isoprenoid biosynthesis; isopentenyl diphosphate biosynthesis via DXP pathway; isopentenyl diphosphate from 1-deoxy-D-xylulose 5-phosphate: step 2/6. Its pathway is isoprenoid biosynthesis; isopentenyl diphosphate biosynthesis via DXP pathway; isopentenyl diphosphate from 1-deoxy-D-xylulose 5-phosphate: step 4/6. Functionally, bifunctional enzyme that catalyzes the formation of 4-diphosphocytidyl-2-C-methyl-D-erythritol from CTP and 2-C-methyl-D-erythritol 4-phosphate (MEP) (IspD), and catalyzes the conversion of 4-diphosphocytidyl-2-C-methyl-D-erythritol 2-phosphate (CDP-ME2P) to 2-C-methyl-D-erythritol 2,4-cyclodiphosphate (ME-CPP) with a corresponding release of cytidine 5-monophosphate (CMP) (IspF). This chain is Bifunctional enzyme IspD/IspF, found in Desulfotalea psychrophila (strain LSv54 / DSM 12343).